The chain runs to 743 residues: Amylovoran biosynthesis protein AmsF (743 aa).

The first 27 residues, 1 to 27 (MKRRELIRTAFSTIVATAALSSVSARA), serve as a signal peptide directing secretion.

It to R.meliloti ExoP.

It is found in the periplasm. Its pathway is glycan metabolism; exopolysaccharide biosynthesis. Its function is as follows. Involved in the biosynthesis of amylovoran which functions as a virulence factor. May be involved in the polymerization or late modification of the repeating units. This Erwinia amylovora (Fire blight bacteria) protein is Amylovoran biosynthesis protein AmsF (amsF).